Consider the following 394-residue polypeptide: 1-deoxy-D-xylulose 5-phosphate reductoisomerase (394 aa).

Positions 6, 7, 8, 9, 32, and 124 each coordinate NADPH. K125 lines the 1-deoxy-D-xylulose 5-phosphate pocket. E126 lines the NADPH pocket. D148 is a binding site for Mn(2+). Residues S149, E150, S174, and H197 each contribute to the 1-deoxy-D-xylulose 5-phosphate site. Residue E150 participates in Mn(2+) binding. An NADPH-binding site is contributed by G203. 1-deoxy-D-xylulose 5-phosphate is bound by residues S210, N215, K216, and E219. E219 is a binding site for Mn(2+).

The protein belongs to the DXR family. Requires Mg(2+) as cofactor. Mn(2+) is required as a cofactor.

It carries out the reaction 2-C-methyl-D-erythritol 4-phosphate + NADP(+) = 1-deoxy-D-xylulose 5-phosphate + NADPH + H(+). The protein operates within isoprenoid biosynthesis; isopentenyl diphosphate biosynthesis via DXP pathway; isopentenyl diphosphate from 1-deoxy-D-xylulose 5-phosphate: step 1/6. Its function is as follows. Catalyzes the NADPH-dependent rearrangement and reduction of 1-deoxy-D-xylulose-5-phosphate (DXP) to 2-C-methyl-D-erythritol 4-phosphate (MEP). This is 1-deoxy-D-xylulose 5-phosphate reductoisomerase from Streptomyces avermitilis (strain ATCC 31267 / DSM 46492 / JCM 5070 / NBRC 14893 / NCIMB 12804 / NRRL 8165 / MA-4680).